Consider the following 284-residue polypeptide: Bifunctional protein FolD (284 aa).

NADP(+) is bound by residues 165–167, Ser-190, and Val-231; that span reads GRS.

It belongs to the tetrahydrofolate dehydrogenase/cyclohydrolase family. As to quaternary structure, homodimer.

It catalyses the reaction (6R)-5,10-methylene-5,6,7,8-tetrahydrofolate + NADP(+) = (6R)-5,10-methenyltetrahydrofolate + NADPH. The catalysed reaction is (6R)-5,10-methenyltetrahydrofolate + H2O = (6R)-10-formyltetrahydrofolate + H(+). Its pathway is one-carbon metabolism; tetrahydrofolate interconversion. Catalyzes the oxidation of 5,10-methylenetetrahydrofolate to 5,10-methenyltetrahydrofolate and then the hydrolysis of 5,10-methenyltetrahydrofolate to 10-formyltetrahydrofolate. The chain is Bifunctional protein FolD from Bacillus licheniformis (strain ATCC 14580 / DSM 13 / JCM 2505 / CCUG 7422 / NBRC 12200 / NCIMB 9375 / NCTC 10341 / NRRL NRS-1264 / Gibson 46).